The sequence spans 188 residues: Pro-adrenomedullin (188 aa).

Residues 1 to 21 form the signal peptide; sequence MKLVPVALLYLGSLAFLGVDT. Residue R41 is modified to Arginine amide. The propeptide occupies 45–92; it reads ELRESSSYPTGLADVKAGPVQTLIRPQDVKGASRSPQASSPDAARIRV. Residues 69 to 89 form a disordered region; sequence RPQDVKGASRSPQASSPDAAR. A disulfide bridge links C110 with C115. Positions 129 to 175 are disordered; it reads DKDKDGSAPRSKISPQGYGRRRRRSLPEAGLGRTLLQPPEPKLRGAP. Y146 carries the tyrosine amide modification. A propeptide spans 153 to 188 (preproAM C-terminal fragment); it reads SLPEAGLGRTLLQPPEPKLRGAPDSRVHQVLATLRI.

The protein belongs to the adrenomedullin family.

Its subcellular location is the secreted. Its function is as follows. Adrenomedullin/ADM and proadrenomedullin N-20 terminal peptide/PAMP are peptide hormones that act as potent hypotensive and vasodilatator agents. Numerous actions have been reported most related to the physiologic control of fluid and electrolyte homeostasis. In terms of biological role, ADM function is mediated by the CALCRL-RAMP2 and CALCRL-RAMP3 receptor complexes with ADM showing the highest potency for the CALCRL-RAMP2 complex. This chain is Pro-adrenomedullin (ADM), found in Bos taurus (Bovine).